A 275-amino-acid polypeptide reads, in one-letter code: Large ribosomal subunit protein uL2 (275 aa).

The segment at 223-275 is disordered; sequence VAMNPVDHPHGGGEGRTSGGRHPVSPWGQPTKGYKTRSNKRTDKYIVRRRNKK.

It belongs to the universal ribosomal protein uL2 family. In terms of assembly, part of the 50S ribosomal subunit. Forms a bridge to the 30S subunit in the 70S ribosome.

In terms of biological role, one of the primary rRNA binding proteins. Required for association of the 30S and 50S subunits to form the 70S ribosome, for tRNA binding and peptide bond formation. It has been suggested to have peptidyltransferase activity; this is somewhat controversial. Makes several contacts with the 16S rRNA in the 70S ribosome. The chain is Large ribosomal subunit protein uL2 from Shewanella halifaxensis (strain HAW-EB4).